The primary structure comprises 122 residues: Large ribosomal subunit protein uL14 (122 aa).

It belongs to the universal ribosomal protein uL14 family. In terms of assembly, part of the 50S ribosomal subunit. Forms a cluster with proteins L3 and L19. In the 70S ribosome, L14 and L19 interact and together make contacts with the 16S rRNA in bridges B5 and B8.

Its function is as follows. Binds to 23S rRNA. Forms part of two intersubunit bridges in the 70S ribosome. The sequence is that of Large ribosomal subunit protein uL14 from Helicobacter pylori (strain J99 / ATCC 700824) (Campylobacter pylori J99).